A 195-amino-acid chain; its full sequence is Heat shock protein beta-8 (195 aa).

Serine 56 bears the Phosphoserine mark. Threonine 62 carries the phosphothreonine modification. Arginine 70 and arginine 77 each carry asymmetric dimethylarginine. Positions 73-184 constitute a sHSP domain; it reads TATARFGVPA…TFGESSFNNE (112 aa). The interval 175–195 is disordered; sequence TFGESSFNNELPQDSQEVTCT. Polar residues predominate over residues 176 to 195; the sequence is FGESSFNNELPQDSQEVTCT.

This sequence belongs to the small heat shock protein (HSP20) family. Monomer. Forms a ternary complex with BAG3 and HSPA1A. Component of the chaperone-assisted selective autophagy (CASA) complex consisting of BAG3, HSPA8/HSC70, HSPB8 and STUB1/CHIP. Interacts with HSPB1. Interacts with DNAJB6. Interacts with BAG3. Post-translationally, phosphorylated.

It localises to the cytoplasm. Its subcellular location is the nucleus. In terms of biological role, involved in the chaperone-assisted selective autophagy (CASA), a crucial process for protein quality control, particularly in mechanical strained cells and tissues such as muscle. Displays temperature-dependent chaperone activity. This Macaca mulatta (Rhesus macaque) protein is Heat shock protein beta-8 (HSPB8).